A 376-amino-acid polypeptide reads, in one-letter code: 3-aminomethylindole N-methyltransferase (376 aa).

Residues Gly220, Asp243, Asp263, and Met264 each coordinate S-adenosyl-L-homocysteine.

It belongs to the class I-like SAM-binding methyltransferase superfamily. Cation-independent O-methyltransferase family. More present in the fifth leaf than in the second leaf (at protein level).

The catalysed reaction is 3-(aminomethyl)indole + 2 S-adenosyl-L-methionine = gramine + 2 S-adenosyl-L-homocysteine + 2 H(+). Its pathway is alkaloid biosynthesis. Its activity is regulated as follows. Repressed by sodium carbonate, sodium bicarbonate and K-phosphate. Functionally, methylates 3-aminomethylindole (AMI) and N-methyl-3-aminomethylindole (MAMI), two substrates involved in gramine biosynthesis, a toxic indole alkaloid. Can use S-adenosyl-L-methionine (AdoMet) as a methyl donor. Unable to mediate caffeic acid O-methylation. The polypeptide is 3-aminomethylindole N-methyltransferase (Hordeum vulgare subsp. vulgare (Domesticated barley)).